We begin with the raw amino-acid sequence, 213 residues long: tRNA (guanine-N(7)-)-methyltransferase (213 aa).

The S-adenosyl-L-methionine site is built by E44, E69, N96, and D118. D118 is an active-site residue. K122 lines the substrate pocket. The interaction with RNA stretch occupies residues 124 to 129 (RHEKRR). Substrate is bound by residues D154 and 191–194 (TEYE).

Belongs to the class I-like SAM-binding methyltransferase superfamily. TrmB family.

The catalysed reaction is guanosine(46) in tRNA + S-adenosyl-L-methionine = N(7)-methylguanosine(46) in tRNA + S-adenosyl-L-homocysteine. The protein operates within tRNA modification; N(7)-methylguanine-tRNA biosynthesis. Functionally, catalyzes the formation of N(7)-methylguanine at position 46 (m7G46) in tRNA. In Oceanobacillus iheyensis (strain DSM 14371 / CIP 107618 / JCM 11309 / KCTC 3954 / HTE831), this protein is tRNA (guanine-N(7)-)-methyltransferase.